A 484-amino-acid polypeptide reads, in one-letter code: Probable cobyric acid synthase (484 aa).

The GATase cobBQ-type domain maps to 247 to 433 (ELHIQIVKLP…LHGIFHNFAF (187 aa)). Catalysis depends on Cys-325, which acts as the Nucleophile. Residue His-425 is part of the active site.

Belongs to the CobB/CobQ family. CobQ subfamily.

Its pathway is cofactor biosynthesis; adenosylcobalamin biosynthesis. Its function is as follows. Catalyzes amidations at positions B, D, E, and G on adenosylcobyrinic A,C-diamide. NH(2) groups are provided by glutamine, and one molecule of ATP is hydrogenolyzed for each amidation. The polypeptide is Probable cobyric acid synthase (Thermococcus onnurineus (strain NA1)).